Here is a 528-residue protein sequence, read N- to C-terminus: Probable serine/threonine-protein kinase DDB_G0282417 (528 aa).

Residues 49-77 (NNNNNNNNNNNNNNNNNNNNNNNNNNKNN) are compositionally biased toward low complexity. Residues 49-84 (NNNNNNNNNNNNNNNNNNNNNNNNNNKNNNDGDDAA) form a disordered region. The Protein kinase domain maps to 136–466 (QQNRVLIGEG…ESLINNHQYS (331 aa)). Residues 142–150 (IGEGHYGKV) and Lys-166 each bind ATP. Catalysis depends on Asp-266, which acts as the Proton acceptor.

The protein belongs to the protein kinase superfamily. Ser/Thr protein kinase family.

It carries out the reaction L-seryl-[protein] + ATP = O-phospho-L-seryl-[protein] + ADP + H(+). The catalysed reaction is L-threonyl-[protein] + ATP = O-phospho-L-threonyl-[protein] + ADP + H(+). This is Probable serine/threonine-protein kinase DDB_G0282417 from Dictyostelium discoideum (Social amoeba).